A 227-amino-acid polypeptide reads, in one-letter code: Extracellular small neutral protease (227 aa).

A signal peptide spans M1–A29. Positions A30 to G42 are excised as a propeptide. The Ca(2+) site is built by D156 and T158. H163 provides a ligand contact to Zn(2+). The active site involves E164. The Zn(2+) site is built by H167 and D173. A disulfide bridge links C179 with C192.

It belongs to the peptidase M7 family. Ca(2+) serves as cofactor. Requires Zn(2+) as cofactor. Post-translationally, the N-terminus is blocked.

It is found in the secreted. The enzyme catalyses Hydrolyzes proteins with a preference for Tyr or Phe in the P1' position. Has no action on amino-acid p-nitroanilides.. The chain is Extracellular small neutral protease (snpA) from Streptomyces lividans.